The following is a 360-amino-acid chain: Probable neutral protease 2 homolog MCYG_04257 (360 aa).

The first 17 residues, 1–17 (MQLIAFLAALGVPVAFA), serve as a signal peptide directing secretion. The propeptide occupies 18–182 (ATIPSVPLNH…KVKAGSIDKR (165 aa)). A disulfide bond links Cys-190 and Cys-261. N-linked (GlcNAc...) asparagine glycosylation occurs at Asn-262. 2 disulfide bridges follow: Cys-268-Cys-286 and Cys-300-Cys-360. His-311 lines the Zn(2+) pocket. Residue Glu-312 is part of the active site. Zn(2+) is bound by residues His-315 and Asp-326.

Belongs to the peptidase M35 family. Zn(2+) is required as a cofactor.

The protein localises to the secreted. It catalyses the reaction Preferential cleavage of bonds with hydrophobic residues in P1'. Also 3-Asn-|-Gln-4 and 8-Gly-|-Ser-9 bonds in insulin B chain.. Functionally, probable secreted metalloprotease that shows high activities on basic nuclear substrates such as histone and protamine. May be involved in virulence. The polypeptide is Probable neutral protease 2 homolog MCYG_04257 (Arthroderma otae (strain ATCC MYA-4605 / CBS 113480) (Microsporum canis)).